A 303-amino-acid polypeptide reads, in one-letter code: Ribonuclease HIII (303 aa).

Residues 85-302 (CSLIGSDEVG…TKKAYQLLKK (218 aa)) form the RNase H type-2 domain. Positions 91, 92, and 196 each coordinate a divalent metal cation.

Belongs to the RNase HII family. RnhC subfamily. The cofactor is Mn(2+). Requires Mg(2+) as cofactor.

Its subcellular location is the cytoplasm. It carries out the reaction Endonucleolytic cleavage to 5'-phosphomonoester.. In terms of biological role, endonuclease that specifically degrades the RNA of RNA-DNA hybrids. The polypeptide is Ribonuclease HIII (Streptococcus mutans serotype c (strain ATCC 700610 / UA159)).